A 295-amino-acid chain; its full sequence is uncharacterized protein (295 aa).

The HTH araC/xylS-type domain occupies 8 to 106 (QKTINWIESH…HMPPGAYRTF (99 aa)). Positions 25 to 46 (EDIVNVSSFSKFHFHRIFQKEV) form a DNA-binding region, H-T-H motif.

Its function is as follows. Probable transcriptional regulator. This is an uncharacterized protein from Bacillus subtilis (strain 168).